An 818-amino-acid chain; its full sequence is MWKLQPTESGGESVILLAGQEYVVGRKNCEILLTNDQSISRVHAVLTVTEQAVTLKDSSKYGTFVNGEKLESGSTKTLQTGYKITFGVFQSKFSLEKECIVVCSSCVDNEGKVTLSQDIRSVGGRLVSSWTSDCTHLVMPTVKVTIKTICALLCCRPIVKPAFFSALSKAVQQKLPLPKAERFRPQIDEPSLARDDVDLSARPERKSLFKGKTFLFLSSKQMKRLSVAVSCGGGVSQLLDEGALPVSLLESSSTCVLDMISGNSQPVISPASKKWLDSVGQILHRKGLRFITESEVGLAAIHVSNQTYCNPCSSLQSESVKTNPVFASATLSQSTAVDETALAAPSQNITAYVVNTEISQDQSRMVTSGISAVGETPEKTNPTQKASTTNKPLSLGQEPSSTRIVQETVMSSESFSVVESEQKMKKGSVVSARGRVEGPVKQKAPSSGNTTLKHSPQKQTALTSFFQPSSKKRPRESSASSVQPEPKFFKKDIKDNEDDIQQSFSVNRSHKTSSEETSLGQACGTGQNSSSKKRKEPEQDTLLGAEEPTAADDLEMSLEELEFLMSDEMDEPPQTAANKKQRLESGLTSKINSEQLSNQQEVTESKGRKGEKNQQSSSSNIQSMQLDRAGPAVTNQDTQTQSKRSPPDLEAHSSANKGPSKNKTPELEEVKKEEVSFVVNSRPQNGISQTSEAVLKQEMQASTSNSGPKNDPDLPRKLLQVQFMSLTVNNSSRSRPGPLQTHNPNDKNVKRFRKKNVPGFDGLPKIIGGSDLVAHNRSKHSELEEWLRQAAEEEKLNEREETLGDDLFRYNPRPAKKR.

One can recognise an FHA domain in the interval 22–70 (YVVGRKNCEILLTNDQSISRVHAVLTVTEQAVTLKDSSKYGTFVNGEKL). BRCT domains are found at residues 91–168 (SKFS…SALS) and 211–301 (GKTF…LAAI). 3 disordered regions span residues 372–716 (AVGE…DLPR), 729–757 (NNSSRSRPGPLQTHNPNDKNVKRFRKKNV), and 793–818 (EEKLNEREETLGDDLFRYNPRPAKKR). Residues 379-405 (KTNPTQKASTTNKPLSLGQEPSSTRIV) show a composition bias toward polar residues. Residues 409 to 419 (VMSSESFSVVE) show a composition bias toward low complexity. A compositionally biased stretch (polar residues) spans 444-469 (APSSGNTTLKHSPQKQTALTSFFQPS). A Nuclear localization signal motif is present at residues 470 to 475 (SKKRPR). A compositionally biased stretch (polar residues) spans 515–530 (EETSLGQACGTGQNSS). A compositionally biased stretch (acidic residues) spans 549–571 (TAADDLEMSLEELEFLMSDEMDE). Over residues 586-602 (GLTSKINSEQLSNQQEV) the composition is skewed to polar residues. The segment covering 603-612 (TESKGRKGEK) has biased composition (basic and acidic residues). Positions 613–625 (NQQSSSSNIQSMQ) are enriched in low complexity. 2 stretches are compositionally biased toward polar residues: residues 633-644 (VTNQDTQTQSKR) and 653-662 (SSANKGPSKN). Residues 663-675 (KTPELEEVKKEEV) are compositionally biased toward basic and acidic residues. Composition is skewed to polar residues over residues 678-692 (VVNSRPQNGISQTSE) and 699-708 (MQASTSNSGP). Residues 793–808 (EEKLNEREETLGDDLF) are compositionally biased toward basic and acidic residues. The short motif at 804-813 (GDDLFRYNPR) is the FxF/Y motif element.

This sequence belongs to the Nibrin family. As to quaternary structure, component of the MRN complex composed of two heterodimers rad50 and mre11 associated with a single nbn.

It is found in the nucleus. Its subcellular location is the chromosome. It localises to the PML body. The protein localises to the telomere. In terms of biological role, component of the MRN complex, which plays a central role in double-strand break (DSB) repair, DNA recombination, maintenance of telomere integrity and meiosis. The MRN complex is involved in the repair of DNA double-strand breaks (DSBs) via homologous recombination (HR), an error-free mechanism which primarily occurs during S and G2 phases. The complex (1) mediates the end resection of damaged DNA, which generates proper single-stranded DNA, a key initial steps in HR, and is (2) required for the recruitment of other repair factors and efficient activation of ATM and ATR upon DNA damage. The MRN complex possesses single-strand endonuclease activity and double-strand-specific 3'-5' exonuclease activity, which are provided by MRE11, to initiate end resection, which is required for single-strand invasion and recombination. Within the MRN complex, nbn acts as a protein-protein adapter, which specifically recognizes and binds phosphorylated proteins, promoting their recruitment to DNA damage sites. Recruits mre11 and rad50 components of the MRN complex to DSBs in response to DNA damage. Promotes the recruitment of PI3/PI4-kinase family members atm, atr, and probably DNA-PKcs to the DNA damage sites, activating their functions. Mediates the recruitment of phosphorylated rbbp8/CtIP to DSBs, leading to cooperation between the MRN complex and rbbp8/CtIP to initiate end resection. The MRN complex and rbbp8/CtIP are also required for chromosome alignment during metaphase. The polypeptide is Nibrin (nbn) (Danio rerio (Zebrafish)).